The chain runs to 156 residues: Large ribosomal subunit protein uL15 (156 aa).

Residues 1–16 (MVRRFKRGTKYRRGSR) show a composition bias toward basic residues. Residues 1-37 (MVRRFKRGTKYRRGSRTHGWGRVGQHRKSGGSGGKGM) form a disordered region.

This sequence belongs to the universal ribosomal protein uL15 family. In terms of assembly, part of the 50S ribosomal subunit.

Functionally, binds to the 23S rRNA. This Pyrobaculum aerophilum (strain ATCC 51768 / DSM 7523 / JCM 9630 / CIP 104966 / NBRC 100827 / IM2) protein is Large ribosomal subunit protein uL15.